The sequence spans 91 residues: Cell division protein FtsB (91 aa).

Residues 1–3 (MKF) lie on the Cytoplasmic side of the membrane. The helical transmembrane segment at 4-21 (IVGLLLVLLLALQYQLWI) threads the bilayer. At 22–91 (SKDGLGELRQ…ETFFQVVEEP (70 aa)) the chain is on the periplasmic side. Residues 26-74 (LGELRQLSRSIKQQRHENATLIERNQVLKAEVQDLKSGLDALEERARSG) are a coiled coil.

Belongs to the FtsB family. In terms of assembly, part of a complex composed of FtsB, FtsL and FtsQ.

Its subcellular location is the cell inner membrane. Essential cell division protein. May link together the upstream cell division proteins, which are predominantly cytoplasmic, with the downstream cell division proteins, which are predominantly periplasmic. The chain is Cell division protein FtsB from Nitrosococcus oceani (strain ATCC 19707 / BCRC 17464 / JCM 30415 / NCIMB 11848 / C-107).